A 200-amino-acid polypeptide reads, in one-letter code: Serine/arginine-rich splicing factor RSZ22 (200 aa).

The RRM domain occupies 2–71 (SRVYVGNLDP…NGWRVEQSHN (70 aa)). A compositionally biased stretch (basic and acidic residues) spans 62–83 (NGWRVEQSHNRGERGGGGRGGD). 2 disordered regions span residues 62–97 (NGWRVEQSHNRGERGGGGRGGDRGGGGGGRGGRGGS) and 112–200 (RECR…RSRS). Positions 84-96 (RGGGGGGRGGRGG) are enriched in gly residues. The CCHC-type zinc finger occupies 99–116 (LKCYECGETGHFARECRN). Over residues 120-137 (TGRRRSKSRSRTPPRYRR) the composition is skewed to basic residues. Phosphoserine occurs at positions 138, 147, 152, 160, 162, 174, and 200. The span at 138 to 150 (SPSYGRRSYSPRA) shows a compositional bias: low complexity. The span at 151 to 166 (RSPPPPRRRSPSPPPA) shows a compositional bias: pro residues.

It belongs to the splicing factor SR family. RSZ subfamily. As to quaternary structure, component of the spliceosome. Interacts with AFC2, RS2Z33 and RNU1. Post-translationally, extensively phosphorylated on serine residues in the RS domain. Phosphorylated by AFC2. Expressed in primary and lateral roots, stems, petioles, abaxial and adaxial epidermis cells, trichomes, unopened flowers, anther filaments, anthers, stigma, pollen, pollen tube, ovule funiculi, integuments, embryo sac and developing seeds.

The protein resides in the nucleus speckle. It is found in the nucleus. Its subcellular location is the nucleolus. It localises to the nucleoplasm. The protein localises to the cytoplasm. In terms of biological role, sequence-specific RNA-binding protein probably involved in pre-mRNA splicing. In vitro, can complement efficiently splicing-deficient mammalian SRSF7-depleted HeLa cell extract. The protein is Serine/arginine-rich splicing factor RSZ22 (RSZ22) of Arabidopsis thaliana (Mouse-ear cress).